Reading from the N-terminus, the 1179-residue chain is DNA-directed RNA polymerase subunit beta' (1179 aa).

Zn(2+)-binding residues include cysteine 60, cysteine 62, cysteine 75, and cysteine 78. Mg(2+) contacts are provided by aspartate 449, aspartate 451, and aspartate 453. The Zn(2+) site is built by cysteine 796, cysteine 871, cysteine 878, and cysteine 881.

This sequence belongs to the RNA polymerase beta' chain family. As to quaternary structure, the RNAP catalytic core consists of 2 alpha, 1 beta, 1 beta' and 1 omega subunit. When a sigma factor is associated with the core the holoenzyme is formed, which can initiate transcription. Mg(2+) serves as cofactor. Requires Zn(2+) as cofactor.

It catalyses the reaction RNA(n) + a ribonucleoside 5'-triphosphate = RNA(n+1) + diphosphate. In terms of biological role, DNA-dependent RNA polymerase catalyzes the transcription of DNA into RNA using the four ribonucleoside triphosphates as substrates. The sequence is that of DNA-directed RNA polymerase subunit beta' from Symbiobacterium thermophilum (strain DSM 24528 / JCM 14929 / IAM 14863 / T).